We begin with the raw amino-acid sequence, 1699 residues long: Cilia- and flagella-associated protein 61 (1699 aa).

The span at 1–22 (MYSNNQLDNPNHSRSQYRNGDQ) shows a compositional bias: polar residues. Disordered regions lie at residues 1–23 (MYSNNQLDNPNHSRSQYRNGDQS), 489–515 (QLKRPQKKVTKRPKRQKEEDKKEDEFK), and 1340–1365 (ERDANSENADKGFDDTQSRDGDEENQ). A compositionally biased stretch (basic residues) spans 489–503 (QLKRPQKKVTKRPKR). Basic and acidic residues-rich tracts occupy residues 504–515 (QKEEDKKEDEFK) and 1340–1359 (ERDANSENADKGFDDTQSRD).

The protein localises to the cell projection. It is found in the cilium. Its function is as follows. As component of a spoke-associated complex, regulates ciliary mobility by mediating a stable and functional assembly of the radial spoke 3 (RS3). This is Cilia- and flagella-associated protein 61 from Tetrahymena thermophila (strain SB210).